The following is a 547-amino-acid chain: MAAKDVVFGDAARAKMVEGVNILANAVKVTLGPKGRNVVLERSFGGPTVTKDGVSVAKEIELKDKLQNMGAQMVKEVASKTSDNAGDGTTTATVLAQSIVREGMKFVAAGMNPMDLKRGIDKAVGAAVEELKKLSKPTTTSKEIAQVGAISANSDASIGERIAEAMDKVGKEGVITVEDGKSLADELEVVEGMQFDRGYLSPYFINNPEKQVVQLDSPFVLLFDKKVSNIRDLLPVLEQVAKAGRPLLIIAEDVEGEALATLVVNNIRGILKTAAVKAPGFGDRRKAMLEDIAILTGGTVIAEEIGLTLEKATLQDLGQAKRIEIGKENTIIIDGAGDASAIEGRVKQIRAQIEEATSDYDREKLQERVAKLAGGVAVIKVGAATEVEMKEKKARVEDALHATRAAVEEGIVPGGGVALLRARAAIAGLHGENPDQNAGIKIVLRAMEEPLRQIVLNAGEEASVVVAKVIEGKGNYGYNAASGEYGDLVEMGVLDPTKVTRTALQNAASVASLMLTTDCAVAESPKEESAPAMPGGMGGMGGMEGMM.

ATP is bound by residues 30 to 33, K51, 87 to 91, G415, 479 to 481, and D495; these read TLGP, DGTTT, and NAA.

It belongs to the chaperonin (HSP60) family. As to quaternary structure, forms a cylinder of 14 subunits composed of two heptameric rings stacked back-to-back. Interacts with the co-chaperonin GroES.

It is found in the cytoplasm. The enzyme catalyses ATP + H2O + a folded polypeptide = ADP + phosphate + an unfolded polypeptide.. Together with its co-chaperonin GroES, plays an essential role in assisting protein folding. The GroEL-GroES system forms a nano-cage that allows encapsulation of the non-native substrate proteins and provides a physical environment optimized to promote and accelerate protein folding. The protein is Chaperonin GroEL of Cupriavidus metallidurans (strain ATCC 43123 / DSM 2839 / NBRC 102507 / CH34) (Ralstonia metallidurans).